The sequence spans 757 residues: Polyribonucleotide nucleotidyltransferase (757 aa).

Mg(2+)-binding residues include aspartate 525 and aspartate 531. One can recognise a KH domain in the interval 591–650; it reads PRVISVNIPVDKIGELIGPKGKTINAIQDETGADISIEEDGAVYIGAVDGPSAEAARAQV. In terms of domain architecture, S1 motif spans 662–734; that stretch reads GESFLGTVVK…DRGKLSLAPV (73 aa). Residues 736–757 form a disordered region; that stretch reads EEAADQEGSAAASDGPEAPAEG.

The protein belongs to the polyribonucleotide nucleotidyltransferase family. Mg(2+) is required as a cofactor.

Its subcellular location is the cytoplasm. The enzyme catalyses RNA(n+1) + phosphate = RNA(n) + a ribonucleoside 5'-diphosphate. In terms of biological role, involved in mRNA degradation. Catalyzes the phosphorolysis of single-stranded polyribonucleotides processively in the 3'- to 5'-direction. The polypeptide is Polyribonucleotide nucleotidyltransferase (Clavibacter sepedonicus (Clavibacter michiganensis subsp. sepedonicus)).